Reading from the N-terminus, the 571-residue chain is MEYEVKKGKKGFVSPIRRLVFPKAGRRAACRSSVSRRPLHSMPLYPPDYLIDPQILLCDYLEKEVKFLGHLTWVTSSLNPSSRDELLQLLDTARQLKELPLKTTAEQDSILSLSARCLLLTWRDNEELILRIPTHEIAAASYLQDDALHLLVLKTGLGVDPVPAGVDASPGGAGRDPGPPGGAPEKRRVGTAERRHTICSLDWRMGWGGGAAEARAGGGGGGSLERQRAGARASGSWERRQTFSGSWERRHGGGGGGGGAGKPGGSWERRQAGSGGGGSWERRHPGPNPLDPQDPSPDAYCNLVILAVANRDAAEESCALICQVFQIIYGDQSIECVDRAGYHYTSTPERPWLCSRSESCHTDGTYAYDADFSCCSSFNGSQDTFEACYSGTSTPSFHGSHCSGSDHSSLGLEQLQDYMVTLRSKLGPLEIQQFAMLLREYRLGLPIQDYCTGLLKLYGDRRKFLLLGMRPFIPDQDIGYFEGFLEGVGIREGGILTDSFGRIKRSMSSTSASAVRSYDGAAQRPEAQAFHRLLADITHDIEALAPDDDDDDEDEPRGSRGGSDAAEDNYL.

Disordered regions lie at residues 164 to 193 (AGVD…GTAE), 212 to 295 (AEAR…PQDP), and 544 to 571 (LAPD…DNYL). Basic and acidic residues predominate over residues 184–193 (PEKRRVGTAE). Positions 212 to 223 (AEARAGGGGGGS) are enriched in gly residues. Basic and acidic residues predominate over residues 237–251 (WERRQTFSGSWERRH). Over residues 253-264 (GGGGGGGAGKPG) the composition is skewed to gly residues. Over residues 286–295 (GPNPLDPQDP) the composition is skewed to pro residues. Positions 545 to 555 (APDDDDDDEDE) are enriched in acidic residues.

Belongs to the CCM2 family.

The protein is Cerebral cavernous malformations 2 protein-like (CCM2L) of Homo sapiens (Human).